Consider the following 261-residue polypeptide: Gap junction beta-6 protein (261 aa).

Topologically, residues 1-22 (MDWGTLHTFIGGVNKHSTSIGK) are cytoplasmic. Residues 23 to 45 (VWITVIFIFRVMILVVAAQEVWG) traverse the membrane as a helical segment. Topologically, residues 46–75 (DEQEDFVCNTLQPGCKNVCYDHFFPVSHIR) are extracellular. The helical transmembrane segment at 76–98 (LWALQLIFVSTPALLVAMHVAYY) threads the bilayer. At 99-131 (RHETTRKFRRGEKRNDFKDIEDIKKQKVRIEGS) the chain is on the cytoplasmic side. A helical transmembrane segment spans residues 132–154 (LWWTYTSSIFFRIIFEAAFMYVF). The Extracellular segment spans residues 155 to 192 (YFLYNGYHLPWVLKCGIDPCPNLVDCFISRPTEKTVFT). A helical transmembrane segment spans residues 193–215 (IFMISASVICMLLNVAELCYLLL). Topologically, residues 216-261 (KVCFRRSKRAQTQKNHPNHALKESKQNEMNELISDSGQNAITGFPS) are cytoplasmic.

This sequence belongs to the connexin family. Beta-type (group I) subfamily. As to quaternary structure, a connexon is composed of a hexamer of connexins. Interacts with CNST.

Its subcellular location is the cell membrane. The protein localises to the cell junction. It is found in the gap junction. Functionally, one gap junction consists of a cluster of closely packed pairs of transmembrane channels, the connexons, through which materials of low MW diffuse from one cell to a neighboring cell. The polypeptide is Gap junction beta-6 protein (GJB6) (Homo sapiens (Human)).